Here is a 1188-residue protein sequence, read N- to C-terminus: DNA-directed RNA polymerase subunit beta (1188 aa).

Positions 1149 to 1188 are disordered; the sequence is ELRDLDEGEDDDVMHVDDLEKAREKQAQETPEVSENSEEK. Residues 1161-1175 show a composition bias toward basic and acidic residues; it reads VMHVDDLEKAREKQA.

Belongs to the RNA polymerase beta chain family. As to quaternary structure, the RNAP catalytic core consists of 2 alpha, 1 beta, 1 beta' and 1 omega subunit. When a sigma factor is associated with the core the holoenzyme is formed, which can initiate transcription.

It carries out the reaction RNA(n) + a ribonucleoside 5'-triphosphate = RNA(n+1) + diphosphate. In terms of biological role, DNA-dependent RNA polymerase catalyzes the transcription of DNA into RNA using the four ribonucleoside triphosphates as substrates. The polypeptide is DNA-directed RNA polymerase subunit beta (Streptococcus uberis (strain ATCC BAA-854 / 0140J)).